The following is a 252-amino-acid chain: Serine/threonine phosphatase stp (252 aa).

The span at 1–18 (MHAEFRTDRGRIRHHNED) shows a compositional bias: basic and acidic residues. Positions 1–23 (MHAEFRTDRGRIRHHNEDNGGVF) are disordered. A PPM-type phosphatase domain is found at 2-242 (HAEFRTDRGR…DNITVLLVER (241 aa)). 4 residues coordinate Mn(2+): D36, G37, D194, and D233.

This sequence belongs to the PP2C family. Mn(2+) serves as cofactor.

Its subcellular location is the cytoplasm. It is found in the membrane. The catalysed reaction is O-phospho-L-seryl-[protein] + H2O = L-seryl-[protein] + phosphate. The enzyme catalyses O-phospho-L-threonyl-[protein] + H2O = L-threonyl-[protein] + phosphate. Its activity is regulated as follows. Activity not affected by inhibitors of phosphatases of the PPP family such as okadaic acid and cypermethrin, or by inhibitors of phosphatases of the PTP family such as sodium orthovanadate. Its function is as follows. Protein phosphatase that dephosphorylates EF-Tu. The polypeptide is Serine/threonine phosphatase stp (stp) (Listeria monocytogenes serovar 1/2a (strain ATCC BAA-679 / EGD-e)).